An 87-amino-acid polypeptide reads, in one-letter code: Cell division topological specificity factor (87 aa).

This sequence belongs to the MinE family.

Prevents the cell division inhibition by proteins MinC and MinD at internal division sites while permitting inhibition at polar sites. This ensures cell division at the proper site by restricting the formation of a division septum at the midpoint of the long axis of the cell. The chain is Cell division topological specificity factor from Roseiflexus castenholzii (strain DSM 13941 / HLO8).